Consider the following 303-residue polypeptide: Recombination-associated protein RdgC (303 aa).

Belongs to the RdgC family.

The protein resides in the cytoplasm. Its subcellular location is the nucleoid. Its function is as follows. May be involved in recombination. In Pseudoalteromonas translucida (strain TAC 125), this protein is Recombination-associated protein RdgC.